A 613-amino-acid chain; its full sequence is Protein starmaker (613 aa).

A signal peptide spans 1 to 20 (MLSRTVFVPLILAFVGVSIS). Residues 42-613 (FTVQFNVGTP…DGRKTSMPIS (572 aa)) are disordered. Basic and acidic residues-rich tracts occupy residues 62-72 (DGKDSAEKNEA), 117-132 (SAEK…DKPD), 147-193 (DASH…KPEG), 206-284 (SAEK…KSDD), and 291-449 (DEQK…HSDS). The segment covering 450-465 (DSDSDSDSDSDSDSDS) has biased composition (acidic residues). Basic and acidic residues-rich tracts occupy residues 467–482 (SNSR…SSES), 509–521 (DKDS…KTDS), and 538–554 (DDSK…TAEK). Acidic residues predominate over residues 555 to 573 (TDEDSHDVSDDDDDIDAHD). The span at 574-607 (DEAGVEHGTDEASKPHQEPDHHDDTTHGSDDGRK) shows a compositional bias: basic and acidic residues.

The protein localises to the secreted. Its function is as follows. Essential for the formation of otoliths in the inner ear of developing larvae and for the perception of gravity and acceleration. May be one of the organic components of the ortholiths. This Danio rerio (Zebrafish) protein is Protein starmaker (stm).